We begin with the raw amino-acid sequence, 288 residues long: UDP-3-O-acyl-N-acetylglucosamine deacetylase (288 aa).

Residues histidine 79, histidine 236, and aspartate 240 each contribute to the Zn(2+) site. The active-site Proton donor is histidine 263.

This sequence belongs to the LpxC family. It depends on Zn(2+) as a cofactor.

The enzyme catalyses a UDP-3-O-[(3R)-3-hydroxyacyl]-N-acetyl-alpha-D-glucosamine + H2O = a UDP-3-O-[(3R)-3-hydroxyacyl]-alpha-D-glucosamine + acetate. Its pathway is glycolipid biosynthesis; lipid IV(A) biosynthesis; lipid IV(A) from (3R)-3-hydroxytetradecanoyl-[acyl-carrier-protein] and UDP-N-acetyl-alpha-D-glucosamine: step 2/6. Functionally, catalyzes the hydrolysis of UDP-3-O-myristoyl-N-acetylglucosamine to form UDP-3-O-myristoylglucosamine and acetate, the committed step in lipid A biosynthesis. The sequence is that of UDP-3-O-acyl-N-acetylglucosamine deacetylase from Rickettsia prowazekii (strain Madrid E).